The chain runs to 383 residues: Plant intracellular Ras-group-related LRR protein 8 (383 aa).

LRR repeat units lie at residues 56–79, 80–102, 104–126, 127–149, 151–173, 174–197, 199–219, 221–244, 245–268, and 270–290; these read RQNI…SINL, ASIS…LVAR, LNLW…IGCL, SKLK…IEDC, SLEE…GFEL, TNLT…SYLT, LRVL…LENL, NLQV…VGLL, ISLV…GCLR, and IQKL…VVEQ. The short motif at 291-298 is the GVYW; degenerate element; sequence GLEALKQY.

It belongs to the SHOC2 family. Widely expressed except flowers.

Functionally, leucine-rich repeat protein that likely mediates protein interactions, possibly in the context of signal transduction. In Arabidopsis thaliana (Mouse-ear cress), this protein is Plant intracellular Ras-group-related LRR protein 8 (PIRL8).